The sequence spans 422 residues: Inhibitor of growth protein 1 (422 aa).

The disordered stretch occupies residues 261 to 349 (ELGDTAGNSG…EASPADLPID (89 aa)). K278 participates in a covalent cross-link: Glycyl lysine isopeptide (Lys-Gly) (interchain with G-Cter in SUMO2). Basic and acidic residues predominate over residues 297–314 (RNNENRENASSNHDHDDG). Positions 322 to 334 (KKAKTSKKKKRSK) are enriched in basic residues. The PHD-type zinc-finger motif lies at 353 to 402 (PTYCLCNQVSYGEMIGCDNDECPIEWFHFSCVGLNHKPKGKWYCPKCRGE). C356, C358, C369, C374, H380, C383, C396, and C399 together coordinate Zn(2+). The PBR stretch occupies residues 405–422 (KTMDKALEKSKKERAYNR).

It belongs to the ING family. In terms of assembly, interacts with H3K4me3 and to a lesser extent with H3K4me2. Interacts with TP53. Isoform 2 interacts with RSL1D1. Isoform 2 was expressed in all normal tissues and cells examined, as well as in all breast cancer and melanoma cell lines examined. Isoform 3 was expressed in testis, liver, and kidney, weakly expressed in colon and brain and not expressed in breast and cultured melanocytes. Isoform 4 was highly expressed in testis and weakly expressed in brain, but not expressed in breast, colon, kidney, melanocytes, breast cancer or melanoma cell lines.

It is found in the nucleus. In terms of biological role, cooperates with p53/TP53 in the negative regulatory pathway of cell growth by modulating p53-dependent transcriptional activation. Implicated as a tumor suppressor gene. The protein is Inhibitor of growth protein 1 (ING1) of Homo sapiens (Human).